The sequence spans 109 residues: RNA-binding protein Hfq (109 aa).

The Sm domain occupies 9–68; that stretch reads DPFLNALRKEKVSVSVYLVNGIKLQGQVEAFDQFCIVLRNTVNQMVYKHAISTIVPAKSV. Residues 77 to 109 are disordered; sequence PYHQNSNDEQDENVDDIHSDDLEIQENEGNIHE.

It belongs to the Hfq family. In terms of assembly, homohexamer.

RNA chaperone that binds small regulatory RNA (sRNAs) and mRNAs to facilitate mRNA translational regulation in response to envelope stress, environmental stress and changes in metabolite concentrations. Also binds with high specificity to tRNAs. In Francisella tularensis subsp. holarctica (strain FTNF002-00 / FTA), this protein is RNA-binding protein Hfq.